Here is a 444-residue protein sequence, read N- to C-terminus: Glutamyl-tRNA(Gln) amidotransferase subunit D (444 aa).

One can recognise an Asparaginase/glutaminase domain in the interval 92–424 (SEIKIISTGG…EKIQNLMITN (333 aa)). Residues Thr-102, Thr-178, Asp-179, and Lys-257 contribute to the active site.

This sequence belongs to the asparaginase 1 family. GatD subfamily. In terms of assembly, heterodimer of GatD and GatE.

The enzyme catalyses L-glutamyl-tRNA(Gln) + L-glutamine + ATP + H2O = L-glutaminyl-tRNA(Gln) + L-glutamate + ADP + phosphate + H(+). Its function is as follows. Allows the formation of correctly charged Gln-tRNA(Gln) through the transamidation of misacylated Glu-tRNA(Gln) in organisms which lack glutaminyl-tRNA synthetase. The reaction takes place in the presence of glutamine and ATP through an activated gamma-phospho-Glu-tRNA(Gln). The GatDE system is specific for glutamate and does not act on aspartate. This is Glutamyl-tRNA(Gln) amidotransferase subunit D from Saccharolobus solfataricus (strain ATCC 35092 / DSM 1617 / JCM 11322 / P2) (Sulfolobus solfataricus).